Reading from the N-terminus, the 543-residue chain is Probable bifunctional tRNA threonylcarbamoyladenosine biosynthesis protein (543 aa).

Residues 1–329 (MDISKDLICI…YRSDMVEVNW (329 aa)) are kae1. Fe cation contacts are provided by His-112, His-116, and Tyr-133. Residues 133–137 (YVSGG), Asp-165, Gly-178, Glu-182, and Asn-262 each bind L-threonylcarbamoyladenylate. A Fe cation-binding site is contributed by Asp-290. The Protein kinase domain maps to 342–543 (IIPEHLIGKG…KEVEKRARYL (202 aa)). Residues 348–356 (IGKGAEADI) and Lys-369 each bind ATP. The active-site Proton acceptor; for kinase activity is the Asp-461.

This sequence in the N-terminal section; belongs to the KAE1 / TsaD family. In the C-terminal section; belongs to the protein kinase superfamily. Tyr protein kinase family. BUD32 subfamily. In terms of assembly, component of the KEOPS complex that consists of Kae1, Bud32, Cgi121 and Pcc1; the whole complex dimerizes. Fe(2+) serves as cofactor.

It localises to the cytoplasm. It carries out the reaction L-seryl-[protein] + ATP = O-phospho-L-seryl-[protein] + ADP + H(+). The enzyme catalyses L-threonyl-[protein] + ATP = O-phospho-L-threonyl-[protein] + ADP + H(+). The catalysed reaction is L-threonylcarbamoyladenylate + adenosine(37) in tRNA = N(6)-L-threonylcarbamoyladenosine(37) in tRNA + AMP + H(+). In terms of biological role, required for the formation of a threonylcarbamoyl group on adenosine at position 37 (t(6)A37) in tRNAs that read codons beginning with adenine. Is a component of the KEOPS complex that is probably involved in the transfer of the threonylcarbamoyl moiety of threonylcarbamoyl-AMP (TC-AMP) to the N6 group of A37. The Kae1 domain likely plays a direct catalytic role in this reaction. The Bud32 domain probably displays kinase activity that regulates Kae1 function. This chain is Probable bifunctional tRNA threonylcarbamoyladenosine biosynthesis protein, found in Methanococcus maripaludis (strain C6 / ATCC BAA-1332).